The following is a 228-amino-acid chain: Apoptosis regulator R1 (228 aa).

Residues 1–21 (LNPKKKENNGVKNGDREKQHE) show a composition bias toward basic and acidic residues. Residues 1 to 29 (LNPKKKENNGVKNGDREKQHETGNTIFRG) are disordered. The BH1 signature appears at 120-139 (SLFQGGVNWGRIVAFFVFGA). Positions 171-186 (DWIQSNGGWNGFLTLY) match the BH2 motif. A helical transmembrane segment spans residues 207 to 227 (TVLTGAVALGALMTVGALFAS).

This sequence belongs to the Bcl-2 family.

The protein resides in the membrane. In terms of biological role, could be the homolog of mammalian Bcl-W. This chain is Apoptosis regulator R1, found in Xenopus laevis (African clawed frog).